The chain runs to 156 residues: Small ribosomal subunit protein uS7 (156 aa).

The protein belongs to the universal ribosomal protein uS7 family. In terms of assembly, part of the 30S ribosomal subunit. Contacts proteins S9 and S11.

In terms of biological role, one of the primary rRNA binding proteins, it binds directly to 16S rRNA where it nucleates assembly of the head domain of the 30S subunit. Is located at the subunit interface close to the decoding center, probably blocks exit of the E-site tRNA. This chain is Small ribosomal subunit protein uS7, found in Anaeromyxobacter sp. (strain Fw109-5).